Here is a 185-residue protein sequence, read N- to C-terminus: TATA-box-binding protein 3 (185 aa).

A run of 2 repeats spans residues 7–84 (IENV…ANTL) and 100–178 (VQNI…KTEF).

The protein belongs to the TBP family.

General factor that plays a role in the activation of archaeal genes transcribed by RNA polymerase. Binds specifically to the TATA box promoter element which lies close to the position of transcription initiation. This is TATA-box-binding protein 3 from Methanosarcina mazei (strain ATCC BAA-159 / DSM 3647 / Goe1 / Go1 / JCM 11833 / OCM 88) (Methanosarcina frisia).